The primary structure comprises 121 residues: Large ribosomal subunit protein uL18 (121 aa).

It belongs to the universal ribosomal protein uL18 family. As to quaternary structure, part of the 50S ribosomal subunit; part of the 5S rRNA/L5/L18/L25 subcomplex. Contacts the 5S and 23S rRNAs.

Functionally, this is one of the proteins that bind and probably mediate the attachment of the 5S RNA into the large ribosomal subunit, where it forms part of the central protuberance. The polypeptide is Large ribosomal subunit protein uL18 (Mesomycoplasma hyopneumoniae (strain J / ATCC 25934 / NCTC 10110) (Mycoplasma hyopneumoniae)).